A 406-amino-acid chain; its full sequence is Imidazolonepropionase (406 aa).

His-72 and His-74 together coordinate Fe(3+). Zn(2+)-binding residues include His-72 and His-74. 3 residues coordinate 4-imidazolone-5-propanoate: Arg-81, Tyr-144, and His-177. Position 144 (Tyr-144) interacts with N-formimidoyl-L-glutamate. His-242 lines the Fe(3+) pocket. A Zn(2+)-binding site is contributed by His-242. Gln-245 lines the 4-imidazolone-5-propanoate pocket. Asp-317 contributes to the Fe(3+) binding site. Asp-317 provides a ligand contact to Zn(2+). Residues Asn-319 and Gly-321 each contribute to the N-formimidoyl-L-glutamate site. Thr-322 serves as a coordination point for 4-imidazolone-5-propanoate.

It belongs to the metallo-dependent hydrolases superfamily. HutI family. It depends on Zn(2+) as a cofactor. The cofactor is Fe(3+).

Its subcellular location is the cytoplasm. It carries out the reaction 4-imidazolone-5-propanoate + H2O = N-formimidoyl-L-glutamate. It participates in amino-acid degradation; L-histidine degradation into L-glutamate; N-formimidoyl-L-glutamate from L-histidine: step 3/3. Catalyzes the hydrolytic cleavage of the carbon-nitrogen bond in imidazolone-5-propanoate to yield N-formimidoyl-L-glutamate. It is the third step in the universal histidine degradation pathway. The sequence is that of Imidazolonepropionase from Yersinia pseudotuberculosis serotype O:3 (strain YPIII).